The chain runs to 226 residues: Glutathione peroxidase 3 (226 aa).

A signal peptide spans 1 to 24 (MARLLQASCLLSLLLAGFLPQSRG). Selenocysteine 73 is a catalytic residue. Position 73 (selenocysteine 73) is a non-standard amino acid, selenocysteine.

Belongs to the glutathione peroxidase family. As to quaternary structure, homotetramer. Expressed intensively in the kidney and adrenal gland, and weakly in the cerebellum, heart, and lung. Secreted in plasma.

It is found in the secreted. It carries out the reaction 2 glutathione + H2O2 = glutathione disulfide + 2 H2O. It catalyses the reaction tert-butyl hydroperoxide + 2 glutathione = tert-butanol + glutathione disulfide + H2O. Protects cells and enzymes from oxidative damage, by catalyzing the reduction of hydrogen peroxide, lipid peroxides and organic hydroperoxide, by glutathione. This chain is Glutathione peroxidase 3, found in Macaca fuscata fuscata (Japanese macaque).